The following is a 303-amino-acid chain: MQIRRRPPSVAVNVQELQYQVKTPENEPRNILEKIVWFKETEVEQMRDSVSLLDLRKQVANCEPPLSFLDALKHGKTQPALIAEVKKASPSKGVLRENFDPVAIAQAYEAAGASCLSVLTDAEFFQGSFDYLQQIRAAVSLPLLCKEFVIYPYQIYLARSRGADAVLLIAAILSDQDLTYFLKIIKSLGMTALVEVHTLPELERVMDIPGIELIGINNRDLETFTVDLEVTCQLLAQQGTSLQDQDILVVSESGLHTSADLAQVKQAGAGAVLIGESLVKETGNASTHSETEQMQAKISALFS.

The protein belongs to the TrpC family.

The catalysed reaction is 1-(2-carboxyphenylamino)-1-deoxy-D-ribulose 5-phosphate + H(+) = (1S,2R)-1-C-(indol-3-yl)glycerol 3-phosphate + CO2 + H2O. It participates in amino-acid biosynthesis; L-tryptophan biosynthesis; L-tryptophan from chorismate: step 4/5. The chain is Indole-3-glycerol phosphate synthase from Acaryochloris marina (strain MBIC 11017).